The following is a 147-amino-acid chain: Large ribosomal subunit protein uL11 (147 aa).

This sequence belongs to the universal ribosomal protein uL11 family. As to quaternary structure, part of the ribosomal stalk of the 50S ribosomal subunit. Interacts with L10 and the large rRNA to form the base of the stalk. L10 forms an elongated spine to which L12 dimers bind in a sequential fashion forming a multimeric L10(L12)X complex. One or more lysine residues are methylated.

In terms of biological role, forms part of the ribosomal stalk which helps the ribosome interact with GTP-bound translation factors. The chain is Large ribosomal subunit protein uL11 from Thermus thermophilus (strain ATCC BAA-163 / DSM 7039 / HB27).